The primary structure comprises 115 residues: Small ribosomal subunit protein bS6 (115 aa).

The protein belongs to the bacterial ribosomal protein bS6 family.

Its function is as follows. Binds together with bS18 to 16S ribosomal RNA. In Picosynechococcus sp. (strain ATCC 27264 / PCC 7002 / PR-6) (Agmenellum quadruplicatum), this protein is Small ribosomal subunit protein bS6.